Reading from the N-terminus, the 144-residue chain is MGKKAHGGKMKPEIDENGTLLVPPPRTIANQDHFHRLNYLYQISAYQTRARQKARTDAHTPLARNYIKSMDLISKKTKTSLLPTIKRTICKKCHRLLWTPKKLEITSDGALSVMCGCGTVKRFNIGADPNYRTYSEREGNLLNS.

A disordered region spans residues 1–22 (MGKKAHGGKMKPEIDENGTLLV). 4 residues coordinate Zn(2+): Cys90, Cys93, Cys115, and Cys117.

Belongs to the eukaryotic/archaeal RNase P protein component 4 family. Component of nuclear RNase P. RNase P consists of an RNA moiety and at least 9 protein subunits including POP1, POP3, POP4, POP5, POP6, POP7, POP8, RPP1 and RPR2, many of which are shared with the RNase MPR complex. It depends on Zn(2+) as a cofactor.

The protein localises to the nucleus. The catalysed reaction is Endonucleolytic cleavage of RNA, removing 5'-extranucleotides from tRNA precursor.. In terms of biological role, component of ribonuclease P, a protein complex that generates mature tRNA molecules by cleaving their 5'-ends. The chain is Ribonuclease P protein subunit RPR2 (RPR2) from Saccharomyces cerevisiae (strain ATCC 204508 / S288c) (Baker's yeast).